Here is a 548-residue protein sequence, read N- to C-terminus: Chaperonin GroEL (548 aa).

Residues 30-33, Lys-51, 87-91, Gly-415, 479-481, and Asp-495 contribute to the ATP site; these read TLGP, DGTTT, and NAA.

It belongs to the chaperonin (HSP60) family. Forms a cylinder of 14 subunits composed of two heptameric rings stacked back-to-back. Interacts with the co-chaperonin GroES.

Its subcellular location is the cytoplasm. It catalyses the reaction ATP + H2O + a folded polypeptide = ADP + phosphate + an unfolded polypeptide.. Its function is as follows. Together with its co-chaperonin GroES, plays an essential role in assisting protein folding. The GroEL-GroES system forms a nano-cage that allows encapsulation of the non-native substrate proteins and provides a physical environment optimized to promote and accelerate protein folding. The sequence is that of Chaperonin GroEL from Aliivibrio fischeri (strain MJ11) (Vibrio fischeri).